A 100-amino-acid polypeptide reads, in one-letter code: Urease subunit gamma (100 aa).

This sequence belongs to the urease gamma subunit family. Heterotrimer of UreA (gamma), UreB (beta) and UreC (alpha) subunits. Three heterotrimers associate to form the active enzyme.

The protein localises to the cytoplasm. It carries out the reaction urea + 2 H2O + H(+) = hydrogencarbonate + 2 NH4(+). It participates in nitrogen metabolism; urea degradation; CO(2) and NH(3) from urea (urease route): step 1/1. This chain is Urease subunit gamma, found in Photorhabdus laumondii subsp. laumondii (strain DSM 15139 / CIP 105565 / TT01) (Photorhabdus luminescens subsp. laumondii).